The primary structure comprises 210 residues: Large ribosomal subunit protein bL25 (210 aa).

This sequence belongs to the bacterial ribosomal protein bL25 family. CTC subfamily. As to quaternary structure, part of the 50S ribosomal subunit; part of the 5S rRNA/L5/L18/L25 subcomplex. Contacts the 5S rRNA. Binds to the 5S rRNA independently of L5 and L18.

This is one of the proteins that binds to the 5S RNA in the ribosome where it forms part of the central protuberance. The protein is Large ribosomal subunit protein bL25 of Saccharophagus degradans (strain 2-40 / ATCC 43961 / DSM 17024).